The chain runs to 509 residues: tRNA-2-methylthio-N(6)-dimethylallyladenosine synthase (509 aa).

Residues 1-15 are compositionally biased toward polar residues; that stretch reads MNEQQRLASQQVNSS. The tract at residues 1-26 is disordered; sequence MNEQQRLASQQVNSSTKKEEKDYSKY. A compositionally biased stretch (basic and acidic residues) spans 16–25; sequence TKKEEKDYSK. The MTTase N-terminal domain occupies 66 to 184; that stretch reads RKFYIRTYGC…LPYILKDAMF (119 aa). Positions 75, 111, 145, 221, 225, and 228 each coordinate [4Fe-4S] cluster. The Radical SAM core domain maps to 207 to 437; the sequence is RRGDIKAWVN…NALVNKLAIE (231 aa). The region spanning 440–503 is the TRAM domain; it reads DRYKGQIVEV…TWSLNGELVE (64 aa).

The protein belongs to the methylthiotransferase family. MiaB subfamily. In terms of assembly, monomer. Requires [4Fe-4S] cluster as cofactor.

The protein resides in the cytoplasm. The catalysed reaction is N(6)-dimethylallyladenosine(37) in tRNA + (sulfur carrier)-SH + AH2 + 2 S-adenosyl-L-methionine = 2-methylsulfanyl-N(6)-dimethylallyladenosine(37) in tRNA + (sulfur carrier)-H + 5'-deoxyadenosine + L-methionine + A + S-adenosyl-L-homocysteine + 2 H(+). Catalyzes the methylthiolation of N6-(dimethylallyl)adenosine (i(6)A), leading to the formation of 2-methylthio-N6-(dimethylallyl)adenosine (ms(2)i(6)A) at position 37 in tRNAs that read codons beginning with uridine. The sequence is that of tRNA-2-methylthio-N(6)-dimethylallyladenosine synthase from Bacillus cereus (strain ZK / E33L).